An 800-amino-acid chain; its full sequence is Protein MICRORCHIDIA 4 (800 aa).

Disordered regions lie at residues 1-76 (MEPI…ARSD) and 552-702 (AKRQ…RTLS). Over residues 9-18 (NPVTTSTLST) the composition is skewed to polar residues. A compositionally biased stretch (low complexity) spans 36 to 47 (ELSSSNEGSELG). Composition is skewed to basic and acidic residues over residues 559–578 (SAKD…EFDP) and 628–641 (VSKD…EKGG). Positions 666-675 (NSDDDYDCDS) are enriched in acidic residues. The stretch at 699 to 766 (RTLSQLEQEN…QASLIDVFAE (68 aa)) forms a coiled coil. Short sequence motifs (nuclear localization signal) lie at residues 716 to 723 (DKKEEVFL) and 735 to 742 (LRKTLEAE).

Belongs to the MORC ATPase protein family. In terms of assembly, homodimer and heterodimer. Component of an RNA-directed DNA methylation (RdDM) complex. Forms homomeric complexes. The cofactor is Mg(2+). Mn(2+) serves as cofactor.

It is found in the nucleus. Its function is as follows. Exhibits ATPase activity. Binds DNA/RNA in a non-specific manner and exhibits endonuclease activity. Probably involved in DNA repair. Involved in RNA-directed DNA methylation (RdDM) as a component of the RdDM machinery and required for gene silencing. May also be involved in the regulation of chromatin architecture to maintain gene silencing. Together with MORC7, acts to suppress a wide set of non-methylated protein-coding genes, especially involved in pathogen response. Positive regulator of defense against the oomycete Hyaloperonospora arabidopsidis (Hpa). This is Protein MICRORCHIDIA 4 from Arabidopsis thaliana (Mouse-ear cress).